The sequence spans 73 residues: Small ribosomal subunit protein bS18 (73 aa).

The protein belongs to the bacterial ribosomal protein bS18 family. As to quaternary structure, part of the 30S ribosomal subunit. Forms a tight heterodimer with protein bS6.

In terms of biological role, binds as a heterodimer with protein bS6 to the central domain of the 16S rRNA, where it helps stabilize the platform of the 30S subunit. The sequence is that of Small ribosomal subunit protein bS18 from Prochlorococcus marinus subsp. pastoris (strain CCMP1986 / NIES-2087 / MED4).